A 392-amino-acid polypeptide reads, in one-letter code: 8-amino-7-oxononanoate synthase 1 (392 aa).

Position 109 to 110 (109 to 110) interacts with pyridoxal 5'-phosphate; it reads GF. Histidine 134 is a substrate binding site. Pyridoxal 5'-phosphate contacts are provided by residues serine 181, 206-209, and 237-240; these read DDAH and TLSK. Lysine 240 is subject to N6-(pyridoxal phosphate)lysine. Threonine 354 provides a ligand contact to substrate.

It belongs to the class-II pyridoxal-phosphate-dependent aminotransferase family. BioF subfamily. In terms of assembly, homodimer. The cofactor is pyridoxal 5'-phosphate.

The enzyme catalyses 6-carboxyhexanoyl-[ACP] + L-alanine + H(+) = (8S)-8-amino-7-oxononanoate + holo-[ACP] + CO2. Its pathway is cofactor biosynthesis; biotin biosynthesis. Its function is as follows. Catalyzes the decarboxylative condensation of pimeloyl-[acyl-carrier protein] and L-alanine to produce 8-amino-7-oxononanoate (AON), [acyl-carrier protein], and carbon dioxide. The chain is 8-amino-7-oxononanoate synthase 1 (kbl) from Bacillus subtilis (strain 168).